Reading from the N-terminus, the 370-residue chain is Phosphoserine aminotransferase (370 aa).

Position 42 (Arg42) interacts with L-glutamate. Pyridoxal 5'-phosphate-binding residues include Trp108, Thr158, Asp182, and Gln205. Lys206 carries the post-translational modification N6-(pyridoxal phosphate)lysine. Residue 247–248 (NT) coordinates pyridoxal 5'-phosphate.

The protein belongs to the class-V pyridoxal-phosphate-dependent aminotransferase family. SerC subfamily. As to quaternary structure, homodimer. The cofactor is pyridoxal 5'-phosphate.

It localises to the cytoplasm. It carries out the reaction O-phospho-L-serine + 2-oxoglutarate = 3-phosphooxypyruvate + L-glutamate. The enzyme catalyses 4-(phosphooxy)-L-threonine + 2-oxoglutarate = (R)-3-hydroxy-2-oxo-4-phosphooxybutanoate + L-glutamate. The protein operates within amino-acid biosynthesis; L-serine biosynthesis; L-serine from 3-phospho-D-glycerate: step 2/3. It participates in cofactor biosynthesis; pyridoxine 5'-phosphate biosynthesis; pyridoxine 5'-phosphate from D-erythrose 4-phosphate: step 3/5. Functionally, catalyzes the reversible conversion of 3-phosphohydroxypyruvate to phosphoserine and of 3-hydroxy-2-oxo-4-phosphonooxybutanoate to phosphohydroxythreonine. This Albidiferax ferrireducens (strain ATCC BAA-621 / DSM 15236 / T118) (Rhodoferax ferrireducens) protein is Phosphoserine aminotransferase.